The sequence spans 475 residues: Ribulose bisphosphate carboxylase large chain (475 aa).

Positions 1 to 2 (MS) are excised as a propeptide. P3 carries the N-acetylproline modification. Position 14 is an N6,N6,N6-trimethyllysine (K14). Substrate-binding residues include N123 and T173. K175 serves as the catalytic Proton acceptor. K177 serves as a coordination point for substrate. Residues K201, D203, and E204 each coordinate Mg(2+). K201 bears the N6-carboxylysine mark. The active-site Proton acceptor is the H294. R295, H327, and S379 together coordinate substrate.

It belongs to the RuBisCO large chain family. Type I subfamily. Heterohexadecamer of 8 large chains and 8 small chains; disulfide-linked. The disulfide link is formed within the large subunit homodimers. The cofactor is Mg(2+). The disulfide bond which can form in the large chain dimeric partners within the hexadecamer appears to be associated with oxidative stress and protein turnover.

It localises to the plastid. It is found in the chloroplast. The catalysed reaction is 2 (2R)-3-phosphoglycerate + 2 H(+) = D-ribulose 1,5-bisphosphate + CO2 + H2O. It catalyses the reaction D-ribulose 1,5-bisphosphate + O2 = 2-phosphoglycolate + (2R)-3-phosphoglycerate + 2 H(+). In terms of biological role, ruBisCO catalyzes two reactions: the carboxylation of D-ribulose 1,5-bisphosphate, the primary event in carbon dioxide fixation, as well as the oxidative fragmentation of the pentose substrate in the photorespiration process. Both reactions occur simultaneously and in competition at the same active site. The protein is Ribulose bisphosphate carboxylase large chain (rbcL) of Cucumis sativus (Cucumber).